The chain runs to 74 residues: MIAQSTRLAAAVSSSAASAGVSRIAASAMASTIFKRSPGNSFNSFKEYRENAKTYGPLSASLATRRHLAHAPKL.

Residues 8-30 (LAAAVSSSAASAGVSRIAASAMA) traverse the membrane as a helical segment.

The protein localises to the mitochondrion outer membrane. This is an uncharacterized protein from Saccharomyces cerevisiae (strain ATCC 204508 / S288c) (Baker's yeast).